The sequence spans 337 residues: DNA replication regulator sld2 (337 aa).

2 positions are modified to phosphothreonine; by cdc2: threonine 60 and threonine 74. The disordered stretch occupies residues 71 to 97 (KFQTPTKQRAETEANESPKAPRNDYLQ). Serine 87 is subject to Phosphoserine; by cdc2. Phosphothreonine; by cdc2 occurs at positions 99 and 154. Serine 183 carries the phosphoserine modification. The disordered stretch occupies residues 258 to 302 (SMNLSKSHLEGLPEIDEDAENGIDDNEDTTASKDSSPFLDLQSER). Residues 270 to 285 (PEIDEDAENGIDDNED) are compositionally biased toward acidic residues.

It belongs to the SLD2 family. In terms of assembly, interacts with rad4. Post-translationally, phosphorylated by cdc2 at the onset of S-phase.

The protein resides in the cytoplasm. It is found in the nucleus. In terms of biological role, has a role in the initiation of DNA replication. Required at S-phase checkpoint. This chain is DNA replication regulator sld2 (drc1), found in Schizosaccharomyces pombe (strain 972 / ATCC 24843) (Fission yeast).